The following is a 290-amino-acid chain: MILFNLLETQLTRVHSFQEMIKKASVYRHPLANHLMDPEVQKESREDGDDRTVVAEIMRRCFVPAFVTTIPWEGFHFAGHEIRINEATDCYGAVVWPSALVLCYFLETNVKQYNLVDKNVIEIGAGTGLVSIVASLLGAHVTATDLPELLGNLQYNISRNTKTKAKHLPQVKELSWGVALDKNFPRASINFDYILAADVVYAHPFLEELLVTFDHLCKETTVILWVMKFRLEKENKFVDRFEQLFDLEEISSFPSLNIKLYKAMKKNQKSACYPQRRMWKAKPISGRLLL.

Residues Trp96, 124 to 126, Asp145, Trp176, and Ala197 each bind S-adenosyl-L-methionine; that span reads GAG.

The protein belongs to the methyltransferase superfamily. METTL21 family.

Its function is as follows. Protein-lysine methyltransferase. The sequence is that of Protein-lysine methyltransferase METTL21E (METTL21E) from Bos taurus (Bovine).